The following is a 644-amino-acid chain: MTSQVSSILSQISSPTDLKKFSLAELSLLAEQMRHKIISVLTNTGGHLASNLGIIELTIALHYVFSSTEDKFIFDVGHQAYPHKLLTGRNTEEFDRIRHDGGLSGFTSPSESIHDLFFSGHAGNALSLALGMAKATEDSRTHILPILGDAAFSCGLTLEALNNISSNLSKFIVVLNDNNMSISQNVGVMSKNLSRWIHHPKFNLFSRKIEKWLTKIPRYGNSISRRSHKLSICLKSLFCPIPIFEQFNLAYMGPVDGHDIKRLISVFQTARDLPFPVLIHVYTTKGKGLEIAQENPEKYHGVTANFNSSKENKFLPTIKPQLTYPDIFGQTVCTLGEAFPNLHIVTPAMSLGSRLEAFKEKFPNRFIDVGIAEGHAVTFSAGIAKAKSPVICSIYSTFLHRALDNVFHDVCLQGLPVILAIDRAGLAYGDGCSHHGIYDLSFLRAMPNMVICQPRSAVVFQQLLQSSLQWNMPVAIRYPNIAATQRDPIATDVHMHRDPGVGEILSQGEDVLILGLGHMCNTALSIKLQLLTHGISATVVDPVFVKPFDNNLFSILLMHHSKVIIIEEHSIRGGLASEFNDFLATYSFKVDVLHFGIPDAFFAHGDKESLLKRVGLDTESMVKRILTHFNFRTKTSPSNKLSIV.

Thiamine diphosphate is bound by residues histidine 78 and 120-122 (GHA). Aspartate 149 is a Mg(2+) binding site. Residues 150–151 (AA), asparagine 178, and glutamate 373 contribute to the thiamine diphosphate site. A Mg(2+)-binding site is contributed by asparagine 178.

This sequence belongs to the transketolase family. DXPS subfamily. As to quaternary structure, homodimer. Mg(2+) serves as cofactor. It depends on thiamine diphosphate as a cofactor.

The catalysed reaction is D-glyceraldehyde 3-phosphate + pyruvate + H(+) = 1-deoxy-D-xylulose 5-phosphate + CO2. Its pathway is metabolic intermediate biosynthesis; 1-deoxy-D-xylulose 5-phosphate biosynthesis; 1-deoxy-D-xylulose 5-phosphate from D-glyceraldehyde 3-phosphate and pyruvate: step 1/1. Catalyzes the acyloin condensation reaction between C atoms 2 and 3 of pyruvate and glyceraldehyde 3-phosphate to yield 1-deoxy-D-xylulose-5-phosphate (DXP). The sequence is that of 1-deoxy-D-xylulose-5-phosphate synthase from Chlamydia caviae (strain ATCC VR-813 / DSM 19441 / 03DC25 / GPIC) (Chlamydophila caviae).